The chain runs to 660 residues: tRNA 5-methylaminomethyl-2-thiouridine biosynthesis bifunctional protein MnmC (660 aa).

The tRNA (mnm(5)s(2)U34)-methyltransferase stretch occupies residues 1 to 242; the sequence is MTDRIVPATL…KRAMLVGEFA (242 aa). The segment at 266-660 is FAD-dependent cmnm(5)s(2)U34 oxidoreductase; it reads IGAGLAGCAV…VRALRHGRVA (395 aa).

It in the N-terminal section; belongs to the methyltransferase superfamily. tRNA (mnm(5)s(2)U34)-methyltransferase family. In the C-terminal section; belongs to the DAO family. Requires FAD as cofactor.

It is found in the cytoplasm. It carries out the reaction 5-aminomethyl-2-thiouridine(34) in tRNA + S-adenosyl-L-methionine = 5-methylaminomethyl-2-thiouridine(34) in tRNA + S-adenosyl-L-homocysteine + H(+). In terms of biological role, catalyzes the last two steps in the biosynthesis of 5-methylaminomethyl-2-thiouridine (mnm(5)s(2)U) at the wobble position (U34) in tRNA. Catalyzes the FAD-dependent demodification of cmnm(5)s(2)U34 to nm(5)s(2)U34, followed by the transfer of a methyl group from S-adenosyl-L-methionine to nm(5)s(2)U34, to form mnm(5)s(2)U34. This Burkholderia pseudomallei (strain 1710b) protein is tRNA 5-methylaminomethyl-2-thiouridine biosynthesis bifunctional protein MnmC.